A 413-amino-acid chain; its full sequence is Protein arginine N-methyltransferase 2 (413 aa).

The tract at residues 148-187 is disordered; sequence LDGSDTEMGDKGGSARDVPASADSAPADSAGHSSSEPTAV. A compositionally biased stretch (low complexity) spans 162 to 182; that stretch reads ARDVPASADSAPADSAGHSSS. The RMT2 domain occupies 192–413; that stretch reads TAAHQDTYLQ…HYYHPEISFQ (222 aa). S-adenosyl-L-methionine contacts are provided by residues Tyr-199, Met-229, 252–257, 273–275, 300–301, and Asp-321; these read FGMGII, EAH, and WQ.

Belongs to the class I-like SAM-binding methyltransferase superfamily. RMT2 methyltransferase family. Monomer.

Its subcellular location is the cytoplasm. The protein localises to the nucleus. Functionally, S-adenosyl-L-methionine-dependent protein-arginine N-methyltransferase that methylates the delta-nitrogen atom of arginine residues to form N5-methylarginine (type IV) in target proteins. Monomethylates ribosomal protein L12. The chain is Protein arginine N-methyltransferase 2 from Eremothecium gossypii (strain ATCC 10895 / CBS 109.51 / FGSC 9923 / NRRL Y-1056) (Yeast).